The primary structure comprises 751 residues: Semaphorin-3C (751 aa).

An N-terminal signal peptide occupies residues 1 to 20 (MAFRAICVLVGVFICSICVR). In terms of domain architecture, Sema spans 28 to 511 (RVYLTFDELR…SNEGVSQVSL (484 aa)). An N-linked (GlcNAc...) asparagine glycan is attached at Asn81. Cys101 and Cys112 form a disulfide bridge. A glycan (N-linked (GlcNAc...) asparagine) is linked at Asn123. An intrachain disulfide couples Cys130 to Cys139. Residues Asn252 and Asn268 are each glycosylated (N-linked (GlcNAc...) asparagine). 2 disulfide bridges follow: Cys266–Cys378 and Cys290–Cys338. Asn465 is a glycosylation site (N-linked (GlcNAc...) asparagine). An intrachain disulfide couples Cys514 to Cys532. Residues 571–655 (AYRNAAEIVQ…TENSFKQTIA (85 aa)) enclose the Ig-like C2-type domain. Residues Asn585 and Asn586 are each glycosylated (N-linked (GlcNAc...) asparagine). Cys643 and Cys709 form a disulfide bridge.

The protein belongs to the semaphorin family. Interacts with PLXND1.

The protein localises to the secreted. Binds to plexin family members and plays an important role in the regulation of developmental processes. Required for normal cardiovascular development during embryogenesis. Functions as attractant for growing axons, and thereby plays an important role in axon growth and axon guidance. The protein is Semaphorin-3C (Sema3c) of Mus musculus (Mouse).